The following is a 1038-amino-acid chain: Bone morphogenetic protein receptor type-2 (1038 aa).

The signal sequence occupies residues Met-1–Ala-26. Topologically, residues Ser-27–Thr-150 are extracellular. Cystine bridges form between Cys-34–Cys-66, Cys-60–Cys-84, Cys-94–Cys-117, Cys-99–Cys-116, and Cys-118–Cys-123. N-linked (GlcNAc...) asparagine glycosylation is present at Asn-55. N-linked (GlcNAc...) asparagine glycosylation is present at Asn-110. Asn-126 carries N-linked (GlcNAc...) asparagine glycosylation. A helical membrane pass occupies residues Ile-151–Gly-171. Over Tyr-172 to Leu-1038 the chain is Cytoplasmic. Residues Leu-203–Leu-504 form the Protein kinase domain. Residues Ile-209–Val-217, Lys-230, and Glu-280–Tyr-282 each bind ATP. Asp-333 acts as the Proton acceptor in catalysis. ATP-binding positions include Arg-337 to Asn-338 and Asp-351. Position 379 is a phosphothreonine (Thr-379). Ser-586 is modified (phosphoserine). The segment at Gln-593–Met-626 is disordered. Residues Thr-603–Met-626 are compositionally biased toward low complexity. Phosphoserine occurs at positions 680 and 681. The tract at residues Pro-746–Pro-769 is disordered. A Phosphoserine modification is found at Ser-843. Positions Arg-872–Glu-896 are enriched in basic and acidic residues. Residues Arg-872–Arg-974 are disordered. Composition is skewed to polar residues over residues Pro-909–Ala-924 and Arg-937–Lys-964.

Belongs to the protein kinase superfamily. TKL Ser/Thr protein kinase family. TGFB receptor subfamily. Interacts with GDF5. Interacts with BMP4. Interacts with SCUBE3. Interacts with TSC22D1/TSC-22. Interacts with activin A/INHBA. Mg(2+) serves as cofactor. The cofactor is Mn(2+).

The protein resides in the cell membrane. It catalyses the reaction L-threonyl-[receptor-protein] + ATP = O-phospho-L-threonyl-[receptor-protein] + ADP + H(+). The enzyme catalyses L-seryl-[receptor-protein] + ATP = O-phospho-L-seryl-[receptor-protein] + ADP + H(+). On ligand binding, forms a receptor complex consisting of two type II and two type I transmembrane serine/threonine kinases. Type II receptors phosphorylate and activate type I receptors which autophosphorylate, then bind and activate SMAD transcriptional regulators. Can also mediate signaling through the activation of the p38MAPK cascade. Binds to BMP7, BMP2 and, less efficiently, BMP4. Binding is weak but enhanced by the presence of type I receptors for BMPs. Mediates induction of adipogenesis by GDF6. Promotes signaling also by binding to activin A/INHBA. The sequence is that of Bone morphogenetic protein receptor type-2 (Bmpr2) from Mus musculus (Mouse).